Consider the following 507-residue polypeptide: Methionine--tRNA ligase (507 aa).

A 'HIGH' region motif is present at residues 12-22 (YYVNDVSHIGH). The short motif at 295 to 299 (KISKS) is the 'KMSKS' region element. ATP is bound at residue lysine 298.

Belongs to the class-I aminoacyl-tRNA synthetase family. MetG type 2B subfamily. As to quaternary structure, monomer.

The protein resides in the cytoplasm. The catalysed reaction is tRNA(Met) + L-methionine + ATP = L-methionyl-tRNA(Met) + AMP + diphosphate. Its function is as follows. Is required not only for elongation of protein synthesis but also for the initiation of all mRNA translation through initiator tRNA(fMet) aminoacylation. The sequence is that of Methionine--tRNA ligase from Rickettsia typhi (strain ATCC VR-144 / Wilmington).